Here is a 144-residue protein sequence, read N- to C-terminus: MRLALLCGLLLAGITATQGGLLNLNKMVTHMTGKKAFFSYWPYGCHCGLGGKGQPKDATDWCCQKHDCCYAHLKIDGCKSLTDNYKYSISQGTIQCSDNGSWCERQLCACDKEVALCLKQNLDSYNKRLRYYWRPRCKGKTPAC.

Positions 1 to 19 (MRLALLCGLLLAGITATQG) are cleaved as a signal peptide. 7 disulfide bridges follow: Cys45-Cys137, Cys47-Cys63, Cys62-Cys117, Cys68-Cys144, Cys69-Cys110, Cys78-Cys103, and Cys96-Cys108. 3 residues coordinate Ca(2+): His46, Gly48, and Gly50. The active site involves His66. Asp67 is a Ca(2+) binding site. An N-linked (GlcNAc...) asparagine glycan is attached at Asn99. Asp111 is an active-site residue.

This sequence belongs to the phospholipase A2 family. It depends on Ca(2+) as a cofactor. In terms of tissue distribution, highly expressed in secondary lymphoid tissues, spleen and lymph nodes. Expressed at a lesser extent in thymus. Expressed in CD4-positive, IL2RA/CD25-positive, FOXP3-positive Tregs (at protein level). Expressed in myeloid cell subsets resident in spleen and lymph nodes, ITGAX/CD11C-positive dendritic cells and macrophages (at protein level). Enriched in CD4-positive, ITGAM/CD11B-positive dendritic cell subset. Expressed in pulmonary ITGAX/CD11C-positive dendritic cell subset (at protein level).

It is found in the secreted. The protein resides in the cell membrane. Its subcellular location is the cytoplasm. It carries out the reaction a 1,2-diacyl-sn-glycero-3-phosphoethanolamine + H2O = a 1-acyl-sn-glycero-3-phosphoethanolamine + a fatty acid + H(+). The catalysed reaction is 1-hexadecanoyl-2-(9Z-octadecenoyl)-sn-glycero-3-phosphoethanolamine + H2O = 1-hexadecanoyl-sn-glycero-3-phosphoethanolamine + (9Z)-octadecenoate + H(+). It catalyses the reaction 1-hexadecanoyl-2-(9Z,12Z-octadecadienoyl)-sn-glycero-3-phosphoethanolamine + H2O = 1-hexadecanoyl-sn-glycero-3-phosphoethanolamine + (9Z,12Z)-octadecadienoate + H(+). The enzyme catalyses 1,2-dihexadecanoyl-sn-glycero-3-phospho-(1'-sn-glycerol) + H2O = 1-hexadecanoyl-sn-glycero-3-phospho-(1'-sn-glycerol) + hexadecanoate + H(+). It carries out the reaction 1-hexadecanoyl-2-(9Z-octadecenoyl)-sn-glycero-3-phospho-(1'-sn-glycerol) + H2O = 1-hexadecanoyl-sn-glycero-3-phospho-(1'-sn-glycerol) + (9Z)-octadecenoate + H(+). The catalysed reaction is a 1,2-diacyl-sn-glycero-3-phosphocholine + H2O = a 1-acyl-sn-glycero-3-phosphocholine + a fatty acid + H(+). It catalyses the reaction 1,2-dihexadecanoyl-sn-glycero-3-phosphocholine + H2O = 1-hexadecanoyl-sn-glycero-3-phosphocholine + hexadecanoate + H(+). The enzyme catalyses 1-hexadecanoyl-2-(9Z-octadecenoyl)-sn-glycero-3-phosphocholine + H2O = 1-hexadecanoyl-sn-glycero-3-phosphocholine + (9Z)-octadecenoate + H(+). It carries out the reaction 1-hexadecanoyl-2-(9Z,12Z-octadecadienoyl)-sn-glycero-3-phosphocholine + H2O = (9Z,12Z)-octadecadienoate + 1-hexadecanoyl-sn-glycero-3-phosphocholine + H(+). The catalysed reaction is 1-hexadecanoyl-2-(4Z,7Z,10Z,13Z,16Z,19Z-docosahexaenoyl)-sn-glycero-3-phosphocholine + H2O = (4Z,7Z,10Z,13Z,16Z,19Z)-docosahexaenoate + 1-hexadecanoyl-sn-glycero-3-phosphocholine + H(+). Functionally, secretory calcium-dependent phospholipase A2 that primarily targets extracellular lipids, exerting anti-inflammatory and immunosuppressive functions. Hydrolyzes the ester bond of the fatty acyl group attached at sn-2 position of phospholipids (phospholipase A2 activity) with preference for phosphatidylethanolamines and phosphatidylglycerols over phosphatidylcholines. In draining lymph nodes, selectively hydrolyzes diacyl and alkenyl forms of phosphatidylethanolamines, releasing omega-3 polyunsaturated fatty acids (PUFAs) such as eicosapentaenoate and docosahexaenoate that are precursors of the anti-inflammatory lipid mediators, resolvins. During the resolution phase of acute inflammation drives docosahexaenoate-derived resolvin D1 synthesis, which suppresses dendritic cell activation and T-helper 1 immune response. May act in an autocrine and paracrine manner. Via a mechanism independent of its catalytic activity, promotes differentiation of regulatory T cells (Tregs) and participates in the maintenance of immune tolerance. May contribute to lipid remodeling of cellular membranes and generation of lipid mediators involved in pathogen clearance. Displays bactericidal activity against Gram-positive bacteria by directly hydrolyzing phospholipids of the bacterial membrane. The polypeptide is Group IID secretory phospholipase A2 (Pla2g2d) (Mus musculus (Mouse)).